Consider the following 203-residue polypeptide: Endoplasmic reticulum transmembrane protein 3 (203 aa).

The Lumenal segment spans residues 1 to 6 (MSLYYT). A helical membrane pass occupies residues 7 to 27 (LVFAILVVEIFMFSILALPIP). At 28–45 (SRYRRPLTLLLLKPFKSS) the chain is on the cytoplasmic side. The helical transmembrane segment at 46–66 (TVQVAIKCVLGFILLLFIDCI) threads the bilayer. The Lumenal segment spans residues 67 to 110 (NRVYSIDKELQLSSASQNNGAIIAQDRIEVLSRKFFAQRNMYLT). Residues 111 to 131 (GITLFLTFVVVRTFGLVIELL) form a helical membrane-spanning segment. The Cytoplasmic segment spans residues 132–203 (TMKDIYRASP…KSESLQEEIN (72 aa)). Residues 142–171 (PVASSDVKKNDSVTAEAAAQSGASKDDHGD) are disordered.

It belongs to the BCAP29/BCAP31 family.

The protein localises to the endoplasmic reticulum membrane. Its function is as follows. May play a role in anterograde transport of membrane proteins from the endoplasmic reticulum to the Golgi. May be involved in invertase secretion. The polypeptide is Endoplasmic reticulum transmembrane protein 3 (YET3) (Saccharomyces cerevisiae (strain ATCC 204508 / S288c) (Baker's yeast)).